Here is a 398-residue protein sequence, read N- to C-terminus: Nicotinate phosphoribosyltransferase (398 aa).

A Phosphohistidine; by autocatalysis modification is found at H221.

It belongs to the NAPRTase family. Post-translationally, transiently phosphorylated on a His residue during the reaction cycle. Phosphorylation strongly increases the affinity for substrates and increases the rate of nicotinate D-ribonucleotide production. Dephosphorylation regenerates the low-affinity form of the enzyme, leading to product release.

The enzyme catalyses nicotinate + 5-phospho-alpha-D-ribose 1-diphosphate + ATP + H2O = nicotinate beta-D-ribonucleotide + ADP + phosphate + diphosphate. It functions in the pathway cofactor biosynthesis; NAD(+) biosynthesis; nicotinate D-ribonucleotide from nicotinate: step 1/1. Its function is as follows. Catalyzes the synthesis of beta-nicotinate D-ribonucleotide from nicotinate and 5-phospho-D-ribose 1-phosphate at the expense of ATP. The chain is Nicotinate phosphoribosyltransferase from Buchnera aphidicola subsp. Schizaphis graminum (strain Sg).